Here is a 255-residue protein sequence, read N- to C-terminus: Coniferyl-alcohol dehydrogenase (255 aa).

Residues 12 to 17, Asp-36, 51 to 52, and Gly-77 contribute to the NAD(+) site; these read GVSSGI and DL. Ser-117 contributes to the substrate binding site. NAD(+) is bound by residues Tyr-157 and Lys-161. Tyr-157 functions as the Proton acceptor in the catalytic mechanism.

Belongs to the short-chain dehydrogenases/reductases (SDR) family.

The catalysed reaction is (E)-coniferol + NADP(+) = (E)-coniferaldehyde + NADPH + H(+). Catalyzes the conversion of coniferyl alcohol into coniferyl aldehyde in the eugenol degradation pathway. Specific for coniferyl alcohol; does not act on cinnamyl alcohol, 4-coumaryl alcohol or sinapyl alcohol. In Pseudomonas sp. (strain HR199 / DSM 7063), this protein is Coniferyl-alcohol dehydrogenase (calA).